Here is a 186-residue protein sequence, read N- to C-terminus: Transcription factor FapR (186 aa).

The protein belongs to the FapR family.

Its function is as follows. Transcriptional factor involved in regulation of membrane lipid biosynthesis by repressing genes involved in fatty acid and phospholipid metabolism. The sequence is that of Transcription factor FapR from Staphylococcus epidermidis (strain ATCC 35984 / DSM 28319 / BCRC 17069 / CCUG 31568 / BM 3577 / RP62A).